The primary structure comprises 538 residues: Glutamyl-tRNA(Gln) amidotransferase subunit B, mitochondrial (538 aa).

The protein belongs to the GatB/GatE family. GatB subfamily. In terms of assembly, subunit of the heterotrimeric GatCAB amidotransferase (AdT) complex, composed of A, B and C subunits.

The protein localises to the mitochondrion. The enzyme catalyses L-glutamyl-tRNA(Gln) + L-glutamine + ATP + H2O = L-glutaminyl-tRNA(Gln) + L-glutamate + ADP + phosphate + H(+). Allows the formation of correctly charged Gln-tRNA(Gln) through the transamidation of misacylated Glu-tRNA(Gln) in the mitochondria. The reaction takes place in the presence of glutamine and ATP through an activated gamma-phospho-Glu-tRNA(Gln). This is Glutamyl-tRNA(Gln) amidotransferase subunit B, mitochondrial from Dictyostelium discoideum (Social amoeba).